The chain runs to 151 residues: Class I hydrophobin A (151 aa).

Positions 1-17 (MQFSVAAVLALATAVAA) are cleaved as a signal peptide. Cystine bridges form between Cys-52-Cys-125, Cys-60-Cys-119, Cys-61-Cys-101, and Cys-126-Cys-144.

This sequence belongs to the fungal hydrophobin family. In terms of assembly, interacts with cutinase cutL1 in a pH-dependent manner. Self-assembles to form functional amyloid fibrils called rodlets. Self-assembly into fibrillar rodlets occurs spontaneously at hydrophobic:hydrophilic interfaces and the rodlets further associate laterally to form amphipathic monolayers. rolA rodlet formation is regulated by the strength of ionic interactions between rolA molecules. Three types of self-assembled structures of rolA are observed: spherical, rod-like, and mesh-like.

The protein resides in the secreted. Its subcellular location is the cell wall. In terms of biological role, aerial growth, conidiation, and dispersal of filamentous fungi in the environment rely upon a capability of their secreting small amphipathic proteins called hydrophobins (HPBs) with low sequence identity. Class I can self-assemble into an outermost layer of rodlet bundles on aerial cell surfaces, conferring cellular hydrophobicity that supports fungal growth, development and dispersal; whereas Class II form highly ordered films at water-air interfaces through intermolecular interactions but contribute nothing to the rodlet structure. RolA is a class I hydrophobin that undergoes a conformational change after its adsorption to hydrophobic surfaces such as the biodegradable polyester polybutylene succinate-coadipate (PBSA) and recruits the cutinase cutL1, resulting in condensation of cutL1 on the PBSA surface and consequent stimulation of PBSA hydrolysis. Increases also the activity of polyethylene terephthalate hydrolase (PETase) that hydrolyzes polyethylene terephthalate (PET), one of the most well-known polyesters that is widely used as packaging material, when the PET samples are preincubated with the hydrophobin. The wetting effect of rolA probably acts on PET surface to become hydrophilic, which leads PETase easier to contact and attack the surface. The chain is Class I hydrophobin A from Aspergillus oryzae (strain ATCC 42149 / RIB 40) (Yellow koji mold).